A 787-amino-acid chain; its full sequence is MGSLHSIFCVCLILLCIFKENSIVGAINSARMVELRETSRRLFYHGYNNYMQFAFPNDELAPLSCEGLGPDYENPNNIGVNDVRGDYLLTLVDVLDTLVVLGDREGFQDAVDKVIHHINFERDTKVQVFEATIRILGGLLSSHIFASEEKYGFQIPLYKGELLTLATELAERLLPAFRTPTGIPFARINLMKGVAYREVTENCAAAASSLVLEFSMLTALTGNNKFKASAENAFFSVWKRRSGIGLLGNSIDVLSGRWIYPVSGVGAGIDSFYEYAFKSYIFLGDPRYLEVWQKSLESLRHYTASLNEYYYQNVYSANGMVMSRWVDSLSAYFPGLLVLAGELELAKKMHLYYFSIYLKFGQLPERYNLYTKSIELNGYPLRPEFAESTYYLYRATKDVFYLHVGELLLSNIENHLWTPCGFAAVENLEKYTLSNRMESFFLSETLKYLFLLFDDDNPIHRSHHDFIFTTEGHLFPVTNQTRLSTSQRIYDGGEVCVAEDYDRSKWPMLYSLIASRDDYDYVSHLVGIDNKAIPSYLIDPSGVCKRPEYSDGFELLYGSALVSPIKSVERVTNNVYISDIIGNKLKFVQKEGSNSLFLYTAGAESINENDTVFLTDPDYETFTRPDALYFDRTIAQLENPNSGQKTFGKFLQFDNDNSLPSKVFKTVLLNNSMCQKPSDTLDKDTAYIAPLGNCSWVQQAKNTNKAGLLILITDGEFINPLENIHSQNSLFNWVKPYIPPTILLKNENNFVSKWANVSVRQSDFDAPSYFQGTPVSNLYLCLKCINS.

A signal peptide spans 1 to 22 (MGSLHSIFCVCLILLCIFKENS). N-linked (GlcNAc...) asparagine glycans are attached at residues asparagine 479, asparagine 609, asparagine 670, asparagine 693, and asparagine 756.

The protein belongs to the glycosyl hydrolase 47 family.

Its subcellular location is the endoplasmic reticulum lumen. Functionally, alpha-mannosidase-like protein involved in endoplasmic reticulum-associated degradation (ERAD). Delivers misfolded glycoproteins to proteasomes. It lacks mannosidase activity. The sequence is that of ER degradation-enhancing alpha-mannosidase-like protein 1 (mnl1) from Schizosaccharomyces pombe (strain 972 / ATCC 24843) (Fission yeast).